A 173-amino-acid chain; its full sequence is Large ribosomal subunit protein uL16 (173 aa).

This sequence belongs to the universal ribosomal protein uL16 family.

The polypeptide is Large ribosomal subunit protein uL16 (Methanococcus maripaludis (strain DSM 14266 / JCM 13030 / NBRC 101832 / S2 / LL)).